Consider the following 930-residue polypeptide: Translation initiation factor IF-2 (930 aa).

A disordered region spans residues 51–325; it reads PGAGKSAAKP…TREIGGVKVP (275 aa). Composition is skewed to low complexity over residues 56-111 and 121-162; these read SAAK…KPGV and TPAA…GNNP. The segment covering 263-295 has biased composition (gly residues); that stretch reads RPGGGPGGGPGRPGGPGGRGGRGNAQGAFGRGG. Residues 296–307 show a composition bias toward basic residues; that stretch reads GPRKGRKSKRAK. The span at 308-320 shows a compositional bias: basic and acidic residues; it reads RQEFEQQHTREIG. Residues 422 to 596 enclose the tr-type G domain; sequence PRPAVVTVMG…LTADAALELT (175 aa). The tract at residues 431–438 is G1; sequence GHVDHGKT. 431 to 438 provides a ligand contact to GTP; that stretch reads GHVDHGKT. Positions 456–460 are G2; sequence GITQH. A G3 region spans residues 481–484; the sequence is DTPG. GTP is bound by residues 481-485 and 535-538; these read DTPGH and NKID. The tract at residues 535-538 is G4; that stretch reads NKID. Residues 571-573 form a G5 region; that stretch reads SAR.

It belongs to the TRAFAC class translation factor GTPase superfamily. Classic translation factor GTPase family. IF-2 subfamily.

The protein resides in the cytoplasm. In terms of biological role, one of the essential components for the initiation of protein synthesis. Protects formylmethionyl-tRNA from spontaneous hydrolysis and promotes its binding to the 30S ribosomal subunits. Also involved in the hydrolysis of GTP during the formation of the 70S ribosomal complex. The polypeptide is Translation initiation factor IF-2 (Micrococcus luteus (strain ATCC 4698 / DSM 20030 / JCM 1464 / CCM 169 / CCUG 5858 / IAM 1056 / NBRC 3333 / NCIMB 9278 / NCTC 2665 / VKM Ac-2230) (Micrococcus lysodeikticus)).